The following is a 338-amino-acid chain: NAC domain-containing protein 46 (338 aa).

In terms of domain architecture, NAC spans 20 to 171 (LPPGFRFHPT…EWVVCRVFHK (152 aa)). Residues 118–177 (VGMKKTLVFYTGRAPKGEKTNWVMHEYRLDGKYSYHNLPKTARDEWVVCRVFHKNAPSTT) mediate DNA binding.

In terms of assembly, interacts with RCD1.

It is found in the nucleus. Transcriptional activator that acts as a positive regulator of leaf senescence. Activates NYC1, SGR1, SGR2 and PAO, which are genes involved in chlorophyll catabolic processes. Activates senescence-associated genes, such as RNS1, SAG12 and SAG13. This is NAC domain-containing protein 46 from Arabidopsis thaliana (Mouse-ear cress).